The sequence spans 805 residues: Ubiquitin carboxyl-terminal hydrolase 10 (805 aa).

The interval 139 to 170 is disordered; that stretch reads DGSGNADSDGTSGTGQRERKKKKKRPPGYYSY. Residues 143-153 show a composition bias toward polar residues; sequence NADSDGTSGTG. One can recognise a USP domain in the interval 422–802; the sequence is RGLINKGNWC…TAYLLYYRRV (381 aa). Catalysis depends on Cys431, which acts as the Nucleophile. Residues 561-593 form a disordered region; that stretch reads HINNGPDPVSEKEEINKDEQEGSDEEWEQVGPR. The span at 569–580 shows a compositional bias: basic and acidic residues; the sequence is VSEKEEINKDEQ. His756 acts as the Proton acceptor in catalysis.

The protein belongs to the peptidase C19 family. USP10 subfamily.

Its subcellular location is the cytoplasm. The protein localises to the nucleus. The enzyme catalyses Thiol-dependent hydrolysis of ester, thioester, amide, peptide and isopeptide bonds formed by the C-terminal Gly of ubiquitin (a 76-residue protein attached to proteins as an intracellular targeting signal).. Hydrolase that can remove conjugated ubiquitin from target proteins such as p53/tp53, rps2/us5, rps3/us3, rps10/eS10, becn1, snx3 and cftr. Acts as an essential regulator of p53/tp53 stability: in unstressed cells, specifically deubiquitinates p53/tp53 in the cytoplasm, leading to counteracts MDM2 action and stabilize p53/tp53. Following DNA damage, translocates to the nucleus and deubiquitinates p53/tp53, leading to regulate the p53/TP53-dependent DNA damage response. Component of a regulatory loop that controls autophagy and p53/tp53 levels. Plays a key role in 40S ribosome subunit recycling when a ribosome has stalled during translation: acts both by inhibiting formation of stress granules, which store stalled translation pre-initiation complexes, and mediating deubiquitination of 40S ribosome subunits. Deubiquitinates cftr in early endosomes, enhancing its endocytic recycling. The sequence is that of Ubiquitin carboxyl-terminal hydrolase 10 (usp10) from Xenopus tropicalis (Western clawed frog).